The chain runs to 356 residues: Glycerol-1-phosphate dehydrogenase [NAD(P)+] (356 aa).

Residues 103-107 (GRSID) and 125-128 (TAAS) each bind NAD(+). Asp-130 contributes to the substrate binding site. NAD(+) is bound at residue Ser-134. Asp-177 lines the substrate pocket. Positions 177 and 257 each coordinate Zn(2+). His-261 is a binding site for substrate. His-273 provides a ligand contact to Zn(2+).

It belongs to the glycerol-1-phosphate dehydrogenase family. It depends on Zn(2+) as a cofactor.

It localises to the cytoplasm. It carries out the reaction sn-glycerol 1-phosphate + NAD(+) = dihydroxyacetone phosphate + NADH + H(+). The catalysed reaction is sn-glycerol 1-phosphate + NADP(+) = dihydroxyacetone phosphate + NADPH + H(+). Its pathway is membrane lipid metabolism; glycerophospholipid metabolism. Its function is as follows. Catalyzes the NAD(P)H-dependent reduction of dihydroxyacetonephosphate (DHAP or glycerone phosphate) to glycerol 1-phosphate (G1P). The G1P thus generated is used as the glycerophosphate backbone of phospholipids in the cellular membranes of Archaea. In Methanosarcina acetivorans (strain ATCC 35395 / DSM 2834 / JCM 12185 / C2A), this protein is Glycerol-1-phosphate dehydrogenase [NAD(P)+].